We begin with the raw amino-acid sequence, 342 residues long: Glucokinase (342 aa).

15–20 (GDVGGT) provides a ligand contact to ATP.

Belongs to the bacterial glucokinase family.

Its subcellular location is the cytoplasm. It carries out the reaction D-glucose + ATP = D-glucose 6-phosphate + ADP + H(+). The chain is Glucokinase from Ralstonia nicotianae (strain ATCC BAA-1114 / GMI1000) (Ralstonia solanacearum).